The chain runs to 356 residues: Thiamine thiazole synthase, chloroplastic (356 aa).

Residues 1–51 constitute a chloroplast transit peptide; sequence MAAMASTAFAPSVSSTTNKLFDSSFHGAPMSPSLLRLQPIKSSRPNNLSIS. Substrate-binding positions include alanine 101, 121–122, glycine 129, and alanine 194; that span reads EQ. Cysteine 223 bears the 2,3-didehydroalanine (Cys) mark. Substrate-binding positions include aspartate 225, histidine 240, methionine 292, and 302 to 304; that span reads RMG.

The protein belongs to the THI4 family. As to quaternary structure, homooctamer. Fe cation is required as a cofactor. During the catalytic reaction, a sulfide is transferred from Cys-223 to a reaction intermediate, generating a dehydroalanine residue.

The protein resides in the plastid. Its subcellular location is the chloroplast. It carries out the reaction [ADP-thiazole synthase]-L-cysteine + glycine + NAD(+) = [ADP-thiazole synthase]-dehydroalanine + ADP-5-ethyl-4-methylthiazole-2-carboxylate + nicotinamide + 3 H2O + 2 H(+). Its function is as follows. Involved in biosynthesis of the thiamine precursor thiazole. Catalyzes the conversion of NAD and glycine to adenosine diphosphate 5-(2-hydroxyethyl)-4-methylthiazole-2-carboxylic acid (ADT), an adenylated thiazole intermediate. The reaction includes an iron-dependent sulfide transfer from a conserved cysteine residue of the protein to a thiazole intermediate. The enzyme can only undergo a single turnover, which suggests it is a suicide enzyme. May have additional roles in adaptation to various stress conditions and in DNA damage tolerance. This Citrus sinensis (Sweet orange) protein is Thiamine thiazole synthase, chloroplastic.